Consider the following 127-residue polypeptide: Large ribosomal subunit protein bL17 (127 aa).

This sequence belongs to the bacterial ribosomal protein bL17 family. In terms of assembly, part of the 50S ribosomal subunit. Contacts protein L32.

This chain is Large ribosomal subunit protein bL17, found in Leuconostoc mesenteroides subsp. mesenteroides (strain ATCC 8293 / DSM 20343 / BCRC 11652 / CCM 1803 / JCM 6124 / NCDO 523 / NBRC 100496 / NCIMB 8023 / NCTC 12954 / NRRL B-1118 / 37Y).